The following is a 410-amino-acid chain: Arginine deiminase (410 aa).

The active-site Amidino-cysteine intermediate is C400.

This sequence belongs to the arginine deiminase family.

The protein resides in the cytoplasm. It catalyses the reaction L-arginine + H2O = L-citrulline + NH4(+). It functions in the pathway amino-acid degradation; L-arginine degradation via ADI pathway; carbamoyl phosphate from L-arginine: step 1/2. In Streptococcus uberis (strain ATCC BAA-854 / 0140J), this protein is Arginine deiminase.